Consider the following 132-residue polypeptide: Transcriptional repressor SmtB homolog (132 aa).

Zn(2+)-binding residues include cysteine 20, histidine 26, cysteine 71, cysteine 73, aspartate 114, histidine 116, histidine 127, and glutamate 130. The 95-residue stretch at 38–132 (MSLDQAQQMA…EVADHLQESD (95 aa)) folds into the HTH arsR-type domain. Residues 72–91 (VCDLAAAMKVSESAVSHQLR) constitute a DNA-binding region (H-T-H motif).

Homodimer.

Functionally, transcriptional repressor of the expression of the ziaA gene. Controls zinc homeostasis by triggering ZiaA-mediated efflux of excess zinc into the periplasm. The protein is Transcriptional repressor SmtB homolog (ziaR) of Synechocystis sp. (strain ATCC 27184 / PCC 6803 / Kazusa).